The sequence spans 398 residues: Tryptophan synthase beta chain (398 aa).

N6-(pyridoxal phosphate)lysine is present on Lys-90.

It belongs to the TrpB family. In terms of assembly, tetramer of two alpha and two beta chains. It depends on pyridoxal 5'-phosphate as a cofactor.

It carries out the reaction (1S,2R)-1-C-(indol-3-yl)glycerol 3-phosphate + L-serine = D-glyceraldehyde 3-phosphate + L-tryptophan + H2O. It participates in amino-acid biosynthesis; L-tryptophan biosynthesis; L-tryptophan from chorismate: step 5/5. Its function is as follows. The beta subunit is responsible for the synthesis of L-tryptophan from indole and L-serine. This chain is Tryptophan synthase beta chain, found in Anoxybacillus flavithermus (strain DSM 21510 / WK1).